The chain runs to 162 residues: EF-hand calcium-binding domain-containing protein 11 (162 aa).

EF-hand domains are found at residues 18-53, 91-126, and 127-162; these read SERR…LFGY, LYRN…VAPK, and LPAR…GQSK. D140, D142, D144, H146, and D151 together coordinate Ca(2+).

This chain is EF-hand calcium-binding domain-containing protein 11 (Efcab11), found in Mus musculus (Mouse).